A 137-amino-acid polypeptide reads, in one-letter code: Ribonuclease VapC18 (137 aa).

The PINc domain maps to 4–126; the sequence is CVDTSAWHHA…YDRVAAITGQ (123 aa). Mg(2+) is bound by residues Asp6 and Asp96.

The protein belongs to the PINc/VapC protein family. The cofactor is Mg(2+).

Functionally, toxic component of a type II toxin-antitoxin (TA) system. An RNase. The cognate antitoxin is VapB18. This is Ribonuclease VapC18 from Mycobacterium tuberculosis (strain ATCC 25618 / H37Rv).